The chain runs to 52 residues: Light-harvesting protein B-870 alpha chain (52 aa).

The Cytoplasmic portion of the chain corresponds to 1–15; sequence MAKFYKIWLIFDPRR. Residues 16–36 traverse the membrane as a helical segment; the sequence is VFVAQGVFLFLLAAMIHLVVL. A bacteriochlorophyll is bound at residue H32. Topologically, residues 37-52 are periplasmic; sequence SSGLNWFEAAAAVGGQ.

Belongs to the antenna complex alpha subunit family. The core complex is formed by different alpha and beta chains, binding bacteriochlorophyll molecules, and arranged most probably in tetrameric structures disposed around the reaction center. The non-pigmented gamma chains may constitute additional components.

It is found in the cell inner membrane. Its function is as follows. Antenna complexes are light-harvesting systems, which transfer the excitation energy to the reaction centers. The polypeptide is Light-harvesting protein B-870 alpha chain (pufA) (Roseobacter denitrificans (strain ATCC 33942 / OCh 114) (Erythrobacter sp. (strain OCh 114))).